We begin with the raw amino-acid sequence, 202 residues long: Phospholipase A2 inhibitor gamma subunit A (202 aa).

The N-terminal stretch at Met-1–Cys-19 is a signal peptide. Cystine bridges form between Cys-22–Cys-47, Cys-25–Cys-32, Cys-40–Cys-68, Cys-74–Cys-95, Cys-96–Cys-101, Cys-119–Cys-144, Cys-137–Cys-166, and Cys-170–Cys-192.

It belongs to the CNF-like-inhibitor family. Heteromer composed of subunit A and subunit B. Expressed by the liver.

The protein resides in the secreted. Inhibits the enzymatic activity of the phospholipase A2 (PLA2). This chain is Phospholipase A2 inhibitor gamma subunit A, found in Elaphe climacophora (Japanese rat snake).